The chain runs to 120 residues: NAD(P)H-quinone oxidoreductase subunit 3, chloroplastic (120 aa).

3 helical membrane-spanning segments follow: residues 9–29 (IFWT…LISG), 64–84 (MFAL…PWAM), and 88–108 (VLGV…IVGS).

The protein belongs to the complex I subunit 3 family. As to quaternary structure, NDH is composed of at least 16 different subunits, 5 of which are encoded in the nucleus.

It localises to the plastid. The protein resides in the chloroplast thylakoid membrane. It catalyses the reaction a plastoquinone + NADH + (n+1) H(+)(in) = a plastoquinol + NAD(+) + n H(+)(out). The catalysed reaction is a plastoquinone + NADPH + (n+1) H(+)(in) = a plastoquinol + NADP(+) + n H(+)(out). Its function is as follows. NDH shuttles electrons from NAD(P)H:plastoquinone, via FMN and iron-sulfur (Fe-S) centers, to quinones in the photosynthetic chain and possibly in a chloroplast respiratory chain. The immediate electron acceptor for the enzyme in this species is believed to be plastoquinone. Couples the redox reaction to proton translocation, and thus conserves the redox energy in a proton gradient. The protein is NAD(P)H-quinone oxidoreductase subunit 3, chloroplastic of Piper cenocladum (Ant piper).